A 206-amino-acid chain; its full sequence is Potassium channel B446_29190 (206 aa).

Residue M1 is a topological domain, cytoplasmic. The helical transmembrane segment at 2–25 threads the bilayer; that stretch reads NESGRVEAFSDGVFAIAITLLILD. A RxxxFSD motif motif is present at residues 6–12; that stretch reads RVEAFSD. Residues 26 to 44 lie on the Extracellular side of the membrane; that stretch reads IKVPKADGPGGLWHALGAQ. The short helix H1 stretch occupies residues 31–34; it reads ADGP. The short helix H2 stretch occupies residues 36-42; sequence GLWHALG. Residues 45 to 70 traverse the membrane as a helical segment; the sequence is WPSYAAYVVSFLVIGIMWVNHHQVFS. Over 71-76 the chain is Cytoplasmic; it reads YVARVD. Residues 77–102 form a helical membrane-spanning segment; that stretch reads RALMFLNLLVLMVVAAVPWPTAMLAE. The Extracellular segment spans residues 103 to 110; it reads YLREDRAS. A helical membrane pass occupies residues 111 to 135; that stretch reads HVAAAVYSLVMVAMALAFQALWWHL. Topologically, residues 136-147 are cytoplasmic; that stretch reads TRTGHLFDPRVD. Residues 148–174 form a helical membrane-spanning segment; the sequence is APAARATRIRFALGSLGYPLTVGLAFV. The Extracellular segment spans residues 175-176; sequence SA. The chain crosses the membrane as a helical span at residues 177–192; it reads PLTLAAHGLLALYYGF. Residues 193–206 are Cytoplasmic-facing; sequence NQVPVPTREAAAPS.

Belongs to the TMEM175 family. Homotetramer.

It is found in the membrane. The enzyme catalyses K(+)(in) = K(+)(out). Its function is as follows. Potassium channel. This chain is Potassium channel B446_29190, found in Streptomyces collinus (strain DSM 40733 / Tue 365).